A 261-amino-acid polypeptide reads, in one-letter code: Cytochrome c oxidase subunit 3 (261 aa).

Topologically, residues 1-15 (MAHQAHAYHMVDPSP) are mitochondrial matrix. Residues 16–34 (WPLTGAIAALLMTSGLAIW) form a helical membrane-spanning segment. Residues 35–40 (FHFHST) are Mitochondrial intermembrane-facing. Residues 41–66 (TLMTLGLILLLLTMYQWWRDIIREGT) traverse the membrane as a helical segment. Over 67-72 (FQGHHT) the chain is Mitochondrial matrix. A helical transmembrane segment spans residues 73 to 105 (PPVQKGLRYGMILFITSEVFFFLGFFWAFYHSS). The Mitochondrial intermembrane portion of the chain corresponds to 106 to 128 (LAPTPELGGCWPPTGITPLDPFE). The chain crosses the membrane as a helical span at residues 129–152 (VPLLNTAVLLASGVTVTWAHHSIM). Residues 153–155 (EGE) are Mitochondrial matrix-facing. A helical membrane pass occupies residues 156-183 (RKQAIQSLALTILLGFYFTALQAMEYYE). Residues 184-190 (APFTIAD) lie on the Mitochondrial intermembrane side of the membrane. A helical transmembrane segment spans residues 191–223 (GVYGSTFFVATGFHGLHVIIGSTFLAVCLLRQI). The Mitochondrial matrix segment spans residues 224 to 232 (QYHFTSEHH). A helical transmembrane segment spans residues 233–256 (FGFEAAAWYWHFVDVVWLFLYVSI). At 257–261 (YWWGS) the chain is on the mitochondrial intermembrane side.

Belongs to the cytochrome c oxidase subunit 3 family. As to quaternary structure, component of the cytochrome c oxidase (complex IV, CIV), a multisubunit enzyme composed of 14 subunits. The complex is composed of a catalytic core of 3 subunits MT-CO1, MT-CO2 and MT-CO3, encoded in the mitochondrial DNA, and 11 supernumerary subunits COX4I, COX5A, COX5B, COX6A, COX6B, COX6C, COX7A, COX7B, COX7C, COX8 and NDUFA4, which are encoded in the nuclear genome. The complex exists as a monomer or a dimer and forms supercomplexes (SCs) in the inner mitochondrial membrane with NADH-ubiquinone oxidoreductase (complex I, CI) and ubiquinol-cytochrome c oxidoreductase (cytochrome b-c1 complex, complex III, CIII), resulting in different assemblies (supercomplex SCI(1)III(2)IV(1) and megacomplex MCI(2)III(2)IV(2)).

The protein localises to the mitochondrion inner membrane. The enzyme catalyses 4 Fe(II)-[cytochrome c] + O2 + 8 H(+)(in) = 4 Fe(III)-[cytochrome c] + 2 H2O + 4 H(+)(out). Functionally, component of the cytochrome c oxidase, the last enzyme in the mitochondrial electron transport chain which drives oxidative phosphorylation. The respiratory chain contains 3 multisubunit complexes succinate dehydrogenase (complex II, CII), ubiquinol-cytochrome c oxidoreductase (cytochrome b-c1 complex, complex III, CIII) and cytochrome c oxidase (complex IV, CIV), that cooperate to transfer electrons derived from NADH and succinate to molecular oxygen, creating an electrochemical gradient over the inner membrane that drives transmembrane transport and the ATP synthase. Cytochrome c oxidase is the component of the respiratory chain that catalyzes the reduction of oxygen to water. Electrons originating from reduced cytochrome c in the intermembrane space (IMS) are transferred via the dinuclear copper A center (CU(A)) of subunit 2 and heme A of subunit 1 to the active site in subunit 1, a binuclear center (BNC) formed by heme A3 and copper B (CU(B)). The BNC reduces molecular oxygen to 2 water molecules using 4 electrons from cytochrome c in the IMS and 4 protons from the mitochondrial matrix. The sequence is that of Cytochrome c oxidase subunit 3 (mt-co3) from Carassius auratus (Goldfish).